The sequence spans 46 residues: Small polypeptide DEVIL 5 (46 aa).

The chain crosses the membrane as a helical span at residues 8–24 (VGGTKRKMWSRGVGGVV). The segment at 15 to 46 (MWSRGVGGVVREQKAKLYIIRRCVVMLLCWHD) is required for DVL/RTFL small polypeptide activity.

Belongs to the DVL/RTFL small polypeptides family. Mostly expressed in roots and flowers, and, to a lower extent, in leaves and stems.

The protein localises to the cell membrane. In terms of biological role, small polypeptide acting as a regulatory molecule which coordinates cellular responses required for differentiation, growth and development, including leaves shape, pedicule elongation, inflorescence organization and fruit maturation, probably by restricting polar cell proliferation in lateral organs and coordinating socket cell recruitment and differentiation at trichome sites. The polypeptide is Small polypeptide DEVIL 5 (Arabidopsis thaliana (Mouse-ear cress)).